We begin with the raw amino-acid sequence, 213 residues long: Ras-related protein Rab-4B (213 aa).

Alanine 2 carries the N-acetylalanine modification. Residues glycine 18, threonine 19, glycine 20, lysine 21, serine 22, and cysteine 23 each coordinate GDP. Residues glycine 18, threonine 19, glycine 20, lysine 21, serine 22, cysteine 23, serine 37, histidine 39, and threonine 40 each contribute to the GTP site. A Mg(2+)-binding site is contributed by serine 22. The short motif at 39–44 (HTIGVE) is the Switch 1 element. Threonine 40 and aspartate 63 together coordinate Mg(2+). A Switch 2 motif is present at residues 65 to 74 (AGQERFRSVT). Residue glycine 66 participates in GTP binding. Residue glutamine 67 is modified to 5-glutamyl serotonin. The GDP site is built by asparagine 121, lysine 122, aspartate 124, alanine 152, and leucine 153. The GTP site is built by asparagine 121, lysine 122, aspartate 124, alanine 152, and leucine 153. Serine 185 and serine 193 each carry phosphoserine. 2 S-geranylgeranyl cysteine lipidation sites follow: cysteine 211 and cysteine 213. Position 213 is a cysteine methyl ester (cysteine 213).

Belongs to the small GTPase superfamily. Rab family. Interacts (GTP-bound form) with RUFY1; the interaction allows endosomal tethering and fusion. It depends on Mg(2+) as a cofactor. In terms of processing, serotonylation of Gln-67 by TGM2 during activation and aggregation of platelets leads to constitutive activation of GTPase activity.

The protein resides in the cell membrane. It localises to the early endosome membrane. The enzyme catalyses GTP + H2O = GDP + phosphate + H(+). Its activity is regulated as follows. Regulated by guanine nucleotide exchange factors (GEFs) which promote the exchange of bound GDP for free GTP. Regulated by GTPase activating proteins (GAPs) which increase the GTP hydrolysis activity. Inhibited by GDP dissociation inhibitors (GDIs). Its function is as follows. The small GTPases Rab are key regulators of intracellular membrane trafficking, from the formation of transport vesicles to their fusion with membranes. Rabs cycle between an inactive GDP-bound form and an active GTP-bound form that is able to recruit to membranes different set of downstream effectors directly responsible for vesicle formation, movement, tethering and fusion. RAB4B mediates endosomal tethering and fusion through the interaction with RUFY1 and RAB14. Acts as a regulator of platelet alpha-granule release during activation and aggregation of platelets. This Homo sapiens (Human) protein is Ras-related protein Rab-4B.